A 123-amino-acid polypeptide reads, in one-letter code: Large ribosomal subunit protein uL24 (123 aa).

Belongs to the universal ribosomal protein uL24 family. As to quaternary structure, part of the 50S ribosomal subunit.

Its function is as follows. One of two assembly initiator proteins, it binds directly to the 5'-end of the 23S rRNA, where it nucleates assembly of the 50S subunit. In terms of biological role, one of the proteins that surrounds the polypeptide exit tunnel on the outside of the subunit. The polypeptide is Large ribosomal subunit protein uL24 (Solibacter usitatus (strain Ellin6076)).